Here is a 272-residue protein sequence, read N- to C-terminus: Homeobox protein Hox-D12 (272 aa).

Residues 204–263 constitute a DNA-binding region (homeobox); it reads SRRKRKPYTKQQIAELENEFLANEFINRQKRKELSDRLNLSDQQVKIWFQNRRMKKKRLV.

The protein belongs to the Abd-B homeobox family.

The protein localises to the nucleus. Its function is as follows. Sequence-specific transcription factor which is part of a developmental regulatory system that provides cells with specific positional identities on the anterior-posterior axis. This Heterodontus francisci (Horn shark) protein is Homeobox protein Hox-D12 (HOXD12).